The chain runs to 86 residues: MGRTTKVGSAGRFGPRYGLKIRRRVAAVEAKMKQKHICPVCGRKAVRRISTGIWQCQKCGATFAGGAYLPVTPAGKVAKRVTASKA.

Residues 38–59 (CPVCGRKAVRRISTGIWQCQKC) form a C4-type zinc finger.

This sequence belongs to the eukaryotic ribosomal protein eL43 family. It depends on Zn(2+) as a cofactor.

In Thermococcus onnurineus (strain NA1), this protein is Large ribosomal subunit protein eL43.